A 65-amino-acid polypeptide reads, in one-letter code: UPF0434 protein Mmwyl1_2153 (65 aa).

It belongs to the UPF0434 family.

The chain is UPF0434 protein Mmwyl1_2153 from Marinomonas sp. (strain MWYL1).